We begin with the raw amino-acid sequence, 675 residues long: Putative exonuclease GOR (675 aa).

Residues 66 to 79 (VAKEAAPEASRHLG) show a composition bias toward basic and acidic residues. 2 disordered regions span residues 66–90 (VAKE…APEG) and 225–263 (AKRT…TATT). A GOR1-125 epitope region spans residues 358 to 483 (MPGLSRAALY…VRDGRKESLD (126 aa)).

This sequence belongs to the REXO1/REXO3 family.

The protein localises to the cytoplasm. It is found in the nucleus. This chain is Putative exonuclease GOR (REXO1L1P), found in Homo sapiens (Human).